Reading from the N-terminus, the 361-residue chain is S-adenosylmethionine:tRNA ribosyltransferase-isomerase (361 aa).

This sequence belongs to the QueA family. As to quaternary structure, monomer.

The protein resides in the cytoplasm. It carries out the reaction 7-aminomethyl-7-carbaguanosine(34) in tRNA + S-adenosyl-L-methionine = epoxyqueuosine(34) in tRNA + adenine + L-methionine + 2 H(+). The protein operates within tRNA modification; tRNA-queuosine biosynthesis. Its function is as follows. Transfers and isomerizes the ribose moiety from AdoMet to the 7-aminomethyl group of 7-deazaguanine (preQ1-tRNA) to give epoxyqueuosine (oQ-tRNA). The sequence is that of S-adenosylmethionine:tRNA ribosyltransferase-isomerase from Afipia carboxidovorans (strain ATCC 49405 / DSM 1227 / KCTC 32145 / OM5) (Oligotropha carboxidovorans).